Here is a 443-residue protein sequence, read N- to C-terminus: Na(+)-translocating NADH-quinone reductase subunit A (443 aa).

Belongs to the NqrA family. In terms of assembly, composed of six subunits; NqrA, NqrB, NqrC, NqrD, NqrE and NqrF.

The catalysed reaction is a ubiquinone + n Na(+)(in) + NADH + H(+) = a ubiquinol + n Na(+)(out) + NAD(+). Its function is as follows. NQR complex catalyzes the reduction of ubiquinone-1 to ubiquinol by two successive reactions, coupled with the transport of Na(+) ions from the cytoplasm to the periplasm. NqrA to NqrE are probably involved in the second step, the conversion of ubisemiquinone to ubiquinol. The protein is Na(+)-translocating NADH-quinone reductase subunit A of Mannheimia succiniciproducens (strain KCTC 0769BP / MBEL55E).